The sequence spans 236 residues: Glucosamine-6-phosphate deaminase (236 aa).

The active-site Proton acceptor; for enolization step is the D62. N128 acts as the For ring-opening step in catalysis. H130 functions as the Proton acceptor; for ring-opening step in the catalytic mechanism. E135 (for ring-opening step) is an active-site residue.

The protein belongs to the glucosamine/galactosamine-6-phosphate isomerase family. NagB subfamily.

It carries out the reaction alpha-D-glucosamine 6-phosphate + H2O = beta-D-fructose 6-phosphate + NH4(+). It functions in the pathway amino-sugar metabolism; N-acetylneuraminate degradation; D-fructose 6-phosphate from N-acetylneuraminate: step 5/5. Catalyzes the reversible isomerization-deamination of glucosamine 6-phosphate (GlcN6P) to form fructose 6-phosphate (Fru6P) and ammonium ion. The chain is Glucosamine-6-phosphate deaminase from Pediococcus pentosaceus (strain ATCC 25745 / CCUG 21536 / LMG 10740 / 183-1w).